The primary structure comprises 226 residues: Phosphoribosylformylglycinamidine synthase subunit PurQ (226 aa).

A Glutamine amidotransferase type-1 domain is found at 3–226 (RVAVIRFPGT…FESLVEWCRS (224 aa)). The active-site Nucleophile is C86. Residues H199 and E201 contribute to the active site.

Part of the FGAM synthase complex composed of 1 PurL, 1 PurQ and 2 PurS subunits.

The protein localises to the cytoplasm. It catalyses the reaction N(2)-formyl-N(1)-(5-phospho-beta-D-ribosyl)glycinamide + L-glutamine + ATP + H2O = 2-formamido-N(1)-(5-O-phospho-beta-D-ribosyl)acetamidine + L-glutamate + ADP + phosphate + H(+). The catalysed reaction is L-glutamine + H2O = L-glutamate + NH4(+). It participates in purine metabolism; IMP biosynthesis via de novo pathway; 5-amino-1-(5-phospho-D-ribosyl)imidazole from N(2)-formyl-N(1)-(5-phospho-D-ribosyl)glycinamide: step 1/2. Its function is as follows. Part of the phosphoribosylformylglycinamidine synthase complex involved in the purines biosynthetic pathway. Catalyzes the ATP-dependent conversion of formylglycinamide ribonucleotide (FGAR) and glutamine to yield formylglycinamidine ribonucleotide (FGAM) and glutamate. The FGAM synthase complex is composed of three subunits. PurQ produces an ammonia molecule by converting glutamine to glutamate. PurL transfers the ammonia molecule to FGAR to form FGAM in an ATP-dependent manner. PurS interacts with PurQ and PurL and is thought to assist in the transfer of the ammonia molecule from PurQ to PurL. The protein is Phosphoribosylformylglycinamidine synthase subunit PurQ of Methanopyrus kandleri (strain AV19 / DSM 6324 / JCM 9639 / NBRC 100938).